Reading from the N-terminus, the 392-residue chain is Rhizopuspepsin-5 (392 aa).

Positions Met-1–Ala-21 are cleaved as a signal peptide. The propeptide at Ala-22–Asp-69 is activation peptide. In terms of domain architecture, Peptidase A1 spans Tyr-85–Ala-389. The active site involves Asp-103. Cys-116 and Cys-119 are oxidised to a cystine. The active site involves Asp-286. Cys-320 and Cys-353 are oxidised to a cystine.

Belongs to the peptidase A1 family.

It carries out the reaction Hydrolysis of proteins with broad specificity similar to that of pepsin A, preferring hydrophobic residues at P1 and P1'. Clots milk and activates trypsinogen. Does not cleave 4-Gln-|-His-5, but does cleave 10-His-|-Leu-11 and 12-Val-|-Glu-13 in B chain of insulin.. The polypeptide is Rhizopuspepsin-5 (Rhizopus niveus).